The sequence spans 536 residues: Pre-mRNA-splicing factor SLU7 (536 aa).

Residues 22 to 42 (EARKAGLAPAEVDEDGKEINP) form a disordered region. The CCHC-type zinc-finger motif lies at 94–111 (GACENCGAMTHDKKSCME). Residues 178-201 (KLEEKDGEEGDENVASEEEDEEDG) form a disordered region. The span at 182–200 (KDGEEGDENVASEEEDEED) shows a compositional bias: acidic residues.

This sequence belongs to the SLU7 family.

It is found in the nucleus. Participates in the second catalytic step of pre-mRNA splicing, when the free hydroxyl group of exon I attacks the 3'-splice site to generate spliced mRNA and the excised lariat intron. The sequence is that of Pre-mRNA-splicing factor SLU7 from Oryza sativa subsp. indica (Rice).